The primary structure comprises 186 residues: Peptidyl-tRNA hydrolase (186 aa).

Tyrosine 13 contacts tRNA. The active-site Proton acceptor is the histidine 18. The tRNA site is built by tyrosine 59, asparagine 61, and asparagine 107.

The protein belongs to the PTH family. In terms of assembly, monomer.

It localises to the cytoplasm. The enzyme catalyses an N-acyl-L-alpha-aminoacyl-tRNA + H2O = an N-acyl-L-amino acid + a tRNA + H(+). In terms of biological role, hydrolyzes ribosome-free peptidyl-tRNAs (with 1 or more amino acids incorporated), which drop off the ribosome during protein synthesis, or as a result of ribosome stalling. Functionally, catalyzes the release of premature peptidyl moieties from peptidyl-tRNA molecules trapped in stalled 50S ribosomal subunits, and thus maintains levels of free tRNAs and 50S ribosomes. This is Peptidyl-tRNA hydrolase from Thermotoga sp. (strain RQ2).